The chain runs to 240 residues: Aquaporin Z (240 aa).

A run of 2 helical transmembrane segments spans residues 10–30 and 35–55; these read MIGTFWLTFAGCGSAVIAAGF and IGLVGVSLAFGLSVVTMAYAI. An NPA 1 motif is present at residues 64 to 66; it reads NPA. 3 helical membrane-spanning segments follow: residues 90–110, 131–151, and 160–180; these read VLGAIAAAALLYLIASGAAGF, LVACFVMEVVMTMMFLFVIMG, and GFAPLAIGLALVMIHLVSIPV. The NPA 2 motif lies at 186-188; that stretch reads NPA. Residues 202-222 form a helical membrane-spanning segment; it reads IGQLWLFWVAPLLGGVLGGVI.

This sequence belongs to the MIP/aquaporin (TC 1.A.8) family. In terms of assembly, homotetramer.

The protein resides in the cell inner membrane. The catalysed reaction is H2O(in) = H2O(out). Channel that permits osmotically driven movement of water in both directions. It is involved in the osmoregulation and in the maintenance of cell turgor during volume expansion in rapidly growing cells. It mediates rapid entry or exit of water in response to abrupt changes in osmolarity. This chain is Aquaporin Z, found in Rhodopseudomonas palustris (strain ATCC BAA-98 / CGA009).